We begin with the raw amino-acid sequence, 206 residues long: Small ribosomal subunit protein uS2 (206 aa).

Belongs to the universal ribosomal protein uS2 family.

This is Small ribosomal subunit protein uS2 from Methanothrix thermoacetophila (strain DSM 6194 / JCM 14653 / NBRC 101360 / PT) (Methanosaeta thermophila).